Consider the following 477-residue polypeptide: ETS translocation variant 1 (477 aa).

Ser94 is subject to Phosphoserine. The segment at 128–179 is disordered; that stretch reads PQVGMRPSNPPTPSSTPVSPLHHASPNTAHTPKPDRAFPAHLPPSQSIPDST. Residues Ser191 and Ser216 each carry the phosphoserine; by RPS6KA1 and RPS6KA5 modification. A Glycyl lysine isopeptide (Lys-Gly) (interchain with G-Cter in SUMO2) cross-link involves residue Lys317. A DNA-binding region (ETS) is located at residues 335-415; the sequence is LQLWQFLVAL…AGERYVYKFV (81 aa).

It belongs to the ETS family. Post-translationally, sumoylated. Phosphorylated at Ser-191 and Ser-216 by RPS6KA1 and RPS6KA5; phosphorylation activates transcriptional activity. In terms of tissue distribution, abundant in kidney. Moderate levels seen in the heart, brain, lung, embryo and lower levels seen in spleen, intestine, testis and thymus.

It localises to the nucleus. Functionally, transcriptional activator that binds to DNA sequences containing the consensus pentanucleotide 5'-CGGA[AT]-3'. Required for olfactory dopaminergic neuron differentiation; may directly activate expression of tyrosine hydroxylase (TH). This Mus musculus (Mouse) protein is ETS translocation variant 1.